A 203-amino-acid chain; its full sequence is Recombination protein RecR (203 aa).

The C4-type zinc finger occupies 56-71; that stretch reads CTVCGNVSDDERCRIC. Residues 79-179 form the Toprim domain; sequence SVVCVVEEPK…TVTRIASGLP (101 aa).

Belongs to the RecR family.

In terms of biological role, may play a role in DNA repair. It seems to be involved in an RecBC-independent recombinational process of DNA repair. It may act with RecF and RecO. The protein is Recombination protein RecR of Mycobacterium leprae (strain TN).